The chain runs to 169 residues: uncharacterized protein (169 aa).

S165 bears the Phosphoserine mark.

This is an uncharacterized protein from Drosophila melanogaster (Fruit fly).